We begin with the raw amino-acid sequence, 119 residues long: Large ribosomal subunit protein uL22 (119 aa).

This sequence belongs to the universal ribosomal protein uL22 family. In terms of assembly, part of the 50S ribosomal subunit.

Functionally, this protein binds specifically to 23S rRNA; its binding is stimulated by other ribosomal proteins, e.g. L4, L17, and L20. It is important during the early stages of 50S assembly. It makes multiple contacts with different domains of the 23S rRNA in the assembled 50S subunit and ribosome. In terms of biological role, the globular domain of the protein is located near the polypeptide exit tunnel on the outside of the subunit, while an extended beta-hairpin is found that lines the wall of the exit tunnel in the center of the 70S ribosome. This Chlorobium luteolum (strain DSM 273 / BCRC 81028 / 2530) (Pelodictyon luteolum) protein is Large ribosomal subunit protein uL22.